An 80-amino-acid chain; its full sequence is MSEINQKVVDIIVDKLAVAPAEVTLEANLANDLGADSLDIVELILEFERVFDINIPEDQAEHIKTVGQVVEYLEKRLAEK.

Residues 2–77 (SEINQKVVDI…QVVEYLEKRL (76 aa)) form the Carrier domain. An O-(pantetheine 4'-phosphoryl)serine modification is found at serine 37.

Belongs to the acyl carrier protein (ACP) family. In terms of processing, 4'-phosphopantetheine is transferred from CoA to a specific serine of apo-ACP by AcpS. This modification is essential for activity because fatty acids are bound in thioester linkage to the sulfhydryl of the prosthetic group.

The protein localises to the cytoplasm. It participates in lipid metabolism; fatty acid biosynthesis. Carrier of the growing fatty acid chain in fatty acid biosynthesis. The chain is Acyl carrier protein from Amoebophilus asiaticus (strain 5a2).